Consider the following 100-residue polypeptide: Small ribosomal subunit protein uS14c (100 aa).

The protein belongs to the universal ribosomal protein uS14 family. In terms of assembly, part of the 30S ribosomal subunit.

It is found in the plastid. Its subcellular location is the chloroplast. Its function is as follows. Binds 16S rRNA, required for the assembly of 30S particles. The chain is Small ribosomal subunit protein uS14c from Helianthus annuus (Common sunflower).